The sequence spans 675 residues: Polyamine deacetylase HDAC10 (675 aa).

Asp22 serves as a coordination point for substrate. The Substrate specificity motif lies at 23–26; sequence PACE. A substrate-binding site is contributed by Asp94. Catalysis depends on His137, which acts as the Proton donor/acceptor. Asp174, His176, and Asp267 together coordinate Zn(2+). Residue Tyr307 coordinates substrate. Positions 362–399 are disordered; that stretch reads LAQSETNPKRPRLDATNGGPKESSEPASESNPKKTAQD.

This sequence belongs to the histone deacetylase family. HD type 2 subfamily.

It is found in the cytoplasm. It localises to the nucleus. It carries out the reaction N(8)-acetylspermidine + H2O = spermidine + acetate. The enzyme catalyses N-acetylputrescine + H2O = putrescine + acetate. The catalysed reaction is N-acetylcadaverine + H2O = cadaverine + acetate. Its function is as follows. Polyamine deacetylase (PDAC), which acts preferentially on N(8)-acetylspermidine, and also on acetylcadaverine and acetylputrescine. Exhibits attenuated catalytic activity toward N(1),N(8)-diacetylspermidine and very low activity, if any, toward N(1)-acetylspermidine. Has a very weak lysine deacetylase, if any. The protein is Polyamine deacetylase HDAC10 (hdac10) of Danio rerio (Zebrafish).